A 365-amino-acid chain; its full sequence is Outer capsid protein sigma-3 (365 aa).

The segment at Cys51–Cys73 adopts a CCHC-type zinc-finger fold.

It belongs to the orthoreovirus sigma-3 protein family. As to quaternary structure, heterohexamer of three sigma-3 and three Mu-1 proteins. The RNA-binding form is probably a homodimer. In terms of processing, cleaved during virus the endosomal proteolytic disassembly of the outer capsid.

Its subcellular location is the virion. It is found in the host cytoplasm. It localises to the host nucleus. In terms of biological role, stimulates translation by blocking the activation of the dsRNA-dependent protein kinase EIF2AK2/PKR, thereby inhibiting the host interferon response. Sigma3 prevents the activation of EIF2AK2 by competing with the kinase for dsRNA-binding. The viral outer shell polypeptides, of which sigma-3 is one, impose structural constraints that prevent elongation of nascent transcripts by the RNA-dependent RNA polymerase lambda-3. The protein is Outer capsid protein sigma-3 (S4) of Mammalia (T2J).